A 399-amino-acid polypeptide reads, in one-letter code: Carbamoyl phosphate synthase small chain (399 aa).

Positions 1–209 are CPSase; sequence MEKFKLLKLG…SAINKKLHTS (209 aa). L-glutamine contacts are provided by Ser55, Gly261, and Gly263. The region spanning 213 to 399 is the Glutamine amidotransferase type-1 domain; that stretch reads RIIVLDLGVK…VYIIYKSKSS (187 aa). Cys289 (nucleophile) is an active-site residue. Leu290, Gln293, Asn329, Gly331, and Phe332 together coordinate L-glutamine. Active-site residues include His372 and Glu374.

Belongs to the CarA family. Composed of two chains; the small (or glutamine) chain promotes the hydrolysis of glutamine to ammonia, which is used by the large (or ammonia) chain to synthesize carbamoyl phosphate. Tetramer of heterodimers (alpha,beta)4.

It is found in the plastid. The protein localises to the chloroplast. It carries out the reaction hydrogencarbonate + L-glutamine + 2 ATP + H2O = carbamoyl phosphate + L-glutamate + 2 ADP + phosphate + 2 H(+). The enzyme catalyses L-glutamine + H2O = L-glutamate + NH4(+). The protein operates within amino-acid biosynthesis; L-arginine biosynthesis; carbamoyl phosphate from bicarbonate: step 1/1. It participates in pyrimidine metabolism; UMP biosynthesis via de novo pathway; (S)-dihydroorotate from bicarbonate: step 1/3. Functionally, small subunit of the glutamine-dependent carbamoyl phosphate synthetase (CPSase). CPSase catalyzes the formation of carbamoyl phosphate from the ammonia moiety of glutamine, carbonate, and phosphate donated by ATP, constituting the first step of 2 biosynthetic pathways, one leading to arginine and/or urea and the other to pyrimidine nucleotides. The small subunit (glutamine amidotransferase) binds and cleaves glutamine to supply the large subunit with the substrate ammonia. The protein is Carbamoyl phosphate synthase small chain of Cyanidium caldarium (Red alga).